A 108-amino-acid polypeptide reads, in one-letter code: Phosphoribosyl-AMP cyclohydrolase (108 aa).

Asp78 is a binding site for Mg(2+). Cys79 provides a ligand contact to Zn(2+). Positions 80 and 82 each coordinate Mg(2+). Residues Cys95 and Cys102 each coordinate Zn(2+).

The protein belongs to the PRA-CH family. As to quaternary structure, homodimer. Mg(2+) serves as cofactor. Requires Zn(2+) as cofactor.

Its subcellular location is the cytoplasm. The enzyme catalyses 1-(5-phospho-beta-D-ribosyl)-5'-AMP + H2O = 1-(5-phospho-beta-D-ribosyl)-5-[(5-phospho-beta-D-ribosylamino)methylideneamino]imidazole-4-carboxamide. It participates in amino-acid biosynthesis; L-histidine biosynthesis; L-histidine from 5-phospho-alpha-D-ribose 1-diphosphate: step 3/9. Catalyzes the hydrolysis of the adenine ring of phosphoribosyl-AMP. This Nitrosopumilus maritimus (strain SCM1) protein is Phosphoribosyl-AMP cyclohydrolase.